Consider the following 97-residue polypeptide: UPF0213 protein YE0453 (97 aa).

One can recognise a GIY-YIG domain in the interval 4-79 (SLWHLYLLRT…KQLSKQQKEK (76 aa)).

Belongs to the UPF0213 family.

The chain is UPF0213 protein YE0453 from Yersinia enterocolitica serotype O:8 / biotype 1B (strain NCTC 13174 / 8081).